A 585-amino-acid polypeptide reads, in one-letter code: Protein cereblon (585 aa).

Disordered regions lie at residues methionine 1–serine 109 and phenylalanine 156–aspartate 195. Residues glutamine 80 to serine 95 show a composition bias toward polar residues. Basic and acidic residues predominate over residues glutamine 158–glutamate 167. Pro residues predominate over residues valine 178–proline 189. Residues histidine 225–threonine 451 form the Lon N-terminal domain. One can recognise a CULT domain in the interval glutamate 450–lysine 559. Cysteine 455, cysteine 458, cysteine 524, and cysteine 527 together coordinate Zn(2+).

The protein belongs to the CRBN family. In terms of assembly, likely a component of a DCX (DDB1-CUL4-X-box) protein ligase complex. May interact with pic/DDB1. Ubiquitinated. Expressed in the fat body (at protein level).

Its subcellular location is the nucleus. It functions in the pathway protein modification; protein ubiquitination. Its function is as follows. Substrate recognition component of a DCX (DDB1-CUL4-X-box) E3 protein ligase complex that mediates the ubiquitination and subsequent proteasomal degradation of target proteins. Has an essential role in mediating growth by negatively regulating insulin signaling. It also has a role in maintaining presynaptic function in the neuromuscular junction synapses of third-instar larvae. The chain is Protein cereblon from Drosophila melanogaster (Fruit fly).